The following is a 388-amino-acid chain: UDP-N-acetylglucosamine--N-acetylmuramyl-(pentapeptide) pyrophosphoryl-undecaprenol N-acetylglucosamine transferase (388 aa).

UDP-N-acetyl-alpha-D-glucosamine contacts are provided by residues 42–44, asparagine 159, arginine 195, serine 223, isoleucine 277, and glutamine 322; that span reads TGG.

This sequence belongs to the glycosyltransferase 28 family. MurG subfamily.

The protein resides in the cell inner membrane. The catalysed reaction is di-trans,octa-cis-undecaprenyl diphospho-N-acetyl-alpha-D-muramoyl-L-alanyl-D-glutamyl-meso-2,6-diaminopimeloyl-D-alanyl-D-alanine + UDP-N-acetyl-alpha-D-glucosamine = di-trans,octa-cis-undecaprenyl diphospho-[N-acetyl-alpha-D-glucosaminyl-(1-&gt;4)]-N-acetyl-alpha-D-muramoyl-L-alanyl-D-glutamyl-meso-2,6-diaminopimeloyl-D-alanyl-D-alanine + UDP + H(+). It functions in the pathway cell wall biogenesis; peptidoglycan biosynthesis. Functionally, cell wall formation. Catalyzes the transfer of a GlcNAc subunit on undecaprenyl-pyrophosphoryl-MurNAc-pentapeptide (lipid intermediate I) to form undecaprenyl-pyrophosphoryl-MurNAc-(pentapeptide)GlcNAc (lipid intermediate II). The protein is UDP-N-acetylglucosamine--N-acetylmuramyl-(pentapeptide) pyrophosphoryl-undecaprenol N-acetylglucosamine transferase of Albidiferax ferrireducens (strain ATCC BAA-621 / DSM 15236 / T118) (Rhodoferax ferrireducens).